The primary structure comprises 513 residues: Sphingosine-1-phosphate transporter SPNS2 (513 aa).

11 helical membrane passes run 102-122, 130-150, 163-183, 190-210, 222-242, 276-296, 320-340, 354-374, 378-398, 422-442, and 463-483; these read GLLQ…FGYL, VILS…SFIP, LVGI…GDLF, LMLS…YITG, WALR…LIFV, LATS…PLYL, LIFG…GAGA, LVCA…FVAA, IIAA…NWAI, TSHL…SDLI, and LCPF…LFFL.

Belongs to the major facilitator superfamily. Spinster (TC 2.A.1.49) family.

It is found in the cell membrane. The protein resides in the endosome membrane. The enzyme catalyses sphing-4-enine 1-phosphate(in) = sphing-4-enine 1-phosphate(out). It carries out the reaction sphinganine 1-phosphate(in) = sphinganine 1-phosphate(out). Its function is as follows. Lipid transporter that specifically mediates export of sphingosine-1-phosphate (sphing-4-enine 1-phosphate, S1P) and sphinganine-1-phosphate. This is Sphingosine-1-phosphate transporter SPNS2 (spns2) from Xenopus tropicalis (Western clawed frog).